The primary structure comprises 224 residues: Response regulator protein GraR (224 aa).

The region spanning 2–115 (QILLVEDDNT…VLIAKLQAIY (114 aa)) is the Response regulatory domain. Position 51 is a 4-aspartylphosphate (D51). The segment at residues 126 to 224 (KRTLTWQDAV…KVGKGYMAHE (99 aa)) is a DNA-binding region (ompR/PhoB-type). 3 positions are modified to phosphothreonine: T128, T130, and T149.

As to quaternary structure, interacts with GraX. Phosphorylated by GraS. Phosphorylated by Stk1; phosphorylation increases the DNA-binding activity of GraR.

It is found in the cytoplasm. In terms of biological role, member of the two-component regulatory system GraR/GraS involved in resistance against cationic antimicrobial peptides (CAMPs). Upon phosphorylation by GraS, functions as a transcription regulator by direct binding to promoter regions of target genes such as adhesins, exoproteins, transporters, toxins, and proteins involved in cell wall synthesis. Down-regulates the expression of many genes involved in RNA and amino acid synthesis or glycolysis. The protein is Response regulator protein GraR (graR) of Staphylococcus aureus (strain Mu3 / ATCC 700698).